An 80-amino-acid chain; its full sequence is QAPNYSTASYNVVAVKINLFLSTNNKLYIHDTGVRAVYLAGMKVYLAANPTASSQTFNSDTLVYILDTGINEPNYYINLY.

It belongs to the peptidase S8 family. As to quaternary structure, monomer. As to expression, body cavity.

The protein localises to the secreted. With respect to regulation, inhibited by the serine protease inhibitors DFP, PMSF and TLCK. Not inhibited by the serine protease inhibitors aprotinin, elastinal, SBTI and benzamidine, the cysteine protease inhibitors iodoacetate and E64, or the metalloprotease inhibitors EDTA and EGTA. Functionally, serine protease. Hydrolyzes the alpha chains of fibrin and fibrinogen completely, has lower activity on the beta and gamma chains of fibrin and fibrinogen. The sequence is that of N-V protease from Alitta virens (Sandworm).